A 51-amino-acid polypeptide reads, in one-letter code: Lysis protein for colicin A (51 aa).

Residues 1 to 18 (MKKIIICVILLAIMLLAA) form the signal peptide. A lipid anchor (N-palmitoyl cysteine) is attached at Cys-19. Cys-19 is lipidated: S-diacylglycerol cysteine. A disordered region spans residues 27-51 (TGGGSVSPSSIVTGVSMGSDGVGNP).

It localises to the cell outer membrane. Its function is as follows. Lysis proteins are required for both colicin release and partial cell lysis. In Citrobacter freundii, this protein is Lysis protein for colicin A (cal).